A 647-amino-acid chain; its full sequence is Threonine--tRNA ligase (647 aa).

The TGS domain occupies 1–63; sequence MEVRVEGQMV…PAGCTGIEPV (63 aa). Residues 244-535 are catalytic; it reads DHRKLGRELS…LVENFAGALP (292 aa). The Zn(2+) site is built by Cys336, His387, and His512.

It belongs to the class-II aminoacyl-tRNA synthetase family. Homodimer. The cofactor is Zn(2+).

It localises to the cytoplasm. The catalysed reaction is tRNA(Thr) + L-threonine + ATP = L-threonyl-tRNA(Thr) + AMP + diphosphate + H(+). Its function is as follows. Catalyzes the attachment of threonine to tRNA(Thr) in a two-step reaction: L-threonine is first activated by ATP to form Thr-AMP and then transferred to the acceptor end of tRNA(Thr). Also edits incorrectly charged L-seryl-tRNA(Thr). The polypeptide is Threonine--tRNA ligase (Desulfovibrio desulfuricans (strain ATCC 27774 / DSM 6949 / MB)).